Here is a 255-residue protein sequence, read N- to C-terminus: Flap endonuclease Xni (255 aa).

Mg(2+) is bound at residue D105. Residues 162-253 enclose the 5'-3' exonuclease domain; it reads EHSQFIDYLA…NLSQFRLPNP (92 aa). K(+) is bound by residues L172, A173, P181, V183, and I186. The interaction with DNA stretch occupies residues 185–190; the sequence is GIGPKS.

It belongs to the Xni family. The cofactor is Mg(2+). It depends on K(+) as a cofactor.

Its function is as follows. Has flap endonuclease activity. During DNA replication, flap endonucleases cleave the 5'-overhanging flap structure that is generated by displacement synthesis when DNA polymerase encounters the 5'-end of a downstream Okazaki fragment. This chain is Flap endonuclease Xni, found in Shewanella sediminis (strain HAW-EB3).